A 150-amino-acid polypeptide reads, in one-letter code: UPF0178 protein AHA_0543 (150 aa).

It belongs to the UPF0178 family.

In Aeromonas hydrophila subsp. hydrophila (strain ATCC 7966 / DSM 30187 / BCRC 13018 / CCUG 14551 / JCM 1027 / KCTC 2358 / NCIMB 9240 / NCTC 8049), this protein is UPF0178 protein AHA_0543.